Here is a 289-residue protein sequence, read N- to C-terminus: O-methyltransferase asqN (289 aa).

Position 155 (D155) interacts with S-adenosyl-L-methionine. The active-site Proton acceptor is the H195.

This sequence belongs to the class I-like SAM-binding methyltransferase superfamily. Cation-independent O-methyltransferase family.

It participates in secondary metabolite biosynthesis. Its pathway is alkaloid biosynthesis. It functions in the pathway mycotoxin biosynthesis. Functionally, O-methyltransferase; part of the gene cluster that mediates the biosynthesis of the aspoquinolone mycotoxins. The role of asqN within the aspoquinolone pathway has still to be determined. The first step of the pathway is catalyzed by the nonribosomal peptide synthetase asqK that condenses anthranilic acid and O-methyl-L-tyrosine to produce 4'-methoxycyclopeptin. 4'-methoxycyclopeptin is then converted to 4'-methoxydehydrocyclopeptin by the ketoglutarate-dependent dioxygenase asqJ. AsqJ also converts its first product 4'-methoxydehydrocyclopeptin to 4'-methoxycyclopenin. The following conversion of 4'-methoxycyclopenin into 4'-methoxyviridicatin is catalyzed by the cyclopenase asqI. 4'-methoxyviridicatin is the precursor of quinolone natural products, and is further converted to quinolinone B. The prenyltransferase asqH1 then catalyzes the canonical Friedel-Crafts alkylation of quinolinone B with dimethylallyl cation to yield dimethylallyl quinolone, which is subjected to FAD-dependent dehydrogenation by the FAD-linked oxidoreductase asqF to yield conjugated aryl diene. The delta(3') double bond then serves as the site of the second alkylation with DMAPP catalyzed by the prenyltransferase asqH2 to yield a carbenium ion intermediate, which can be attacked by H(2)O to yield a styrenyl quinolone containing a C3'-hydroxyprenyl chain. The FAD-dependent monooxygenase asqG performs epoxidation of the terminal C7'-C8' olefin. Finally, after dehydratation of the epoxide at C3 by asqC, the quinolone epoxide rearrangement protein asqO catalyzes an enzymatic 3-exo-tet cyclization to yield the cyclopropyl-THF ring system in aspoquinolone. In Emericella nidulans (strain FGSC A4 / ATCC 38163 / CBS 112.46 / NRRL 194 / M139) (Aspergillus nidulans), this protein is O-methyltransferase asqN.